A 215-amino-acid polypeptide reads, in one-letter code: 3,4-dihydroxy-2-butanone 4-phosphate synthase (215 aa).

D-ribulose 5-phosphate-binding positions include 38–39 (RE), D43, 151–155 (RRGHT), and E175. E39 lines the Mg(2+) pocket. H154 provides a ligand contact to Mg(2+).

This sequence belongs to the DHBP synthase family. Homodimer. It depends on Mg(2+) as a cofactor. Requires Mn(2+) as cofactor.

It carries out the reaction D-ribulose 5-phosphate = (2S)-2-hydroxy-3-oxobutyl phosphate + formate + H(+). It participates in cofactor biosynthesis; riboflavin biosynthesis; 2-hydroxy-3-oxobutyl phosphate from D-ribulose 5-phosphate: step 1/1. Functionally, catalyzes the conversion of D-ribulose 5-phosphate to formate and 3,4-dihydroxy-2-butanone 4-phosphate. The protein is 3,4-dihydroxy-2-butanone 4-phosphate synthase of Haemophilus influenzae (strain 86-028NP).